The primary structure comprises 1066 residues: Zinc finger and BTB domain-containing protein 21 (1066 aa).

The BTB domain maps to 30–96; the sequence is CDVLLIVGDQ…IYSSSLFVEK (67 aa). A mediates homodimerization region spans residues 30-96; it reads CDVLLIVGDQ…IYSSSLFVEK (67 aa). Lys-40 is covalently cross-linked (Glycyl lysine isopeptide (Lys-Gly) (interchain with G-Cter in SUMO1); alternate). Residue Lys-40 forms a Glycyl lysine isopeptide (Lys-Gly) (interchain with G-Cter in SUMO2); alternate linkage. Residues 154-177 are compositionally biased toward polar residues; sequence SRNEAQGKTVSQNQPDVSHTSRPS. A disordered region spans residues 154–196; that stretch reads SRNEAQGKTVSQNQPDVSHTSRPSPSIAVKANTNKPHVPKPIE. Residues Lys-255, Lys-266, Lys-273, Lys-312, and Lys-337 each participate in a glycyl lysine isopeptide (Lys-Gly) (interchain with G-Cter in SUMO2) cross-link. Phosphoserine is present on residues Ser-345 and Ser-381. A Glycyl lysine isopeptide (Lys-Gly) (interchain with G-Cter in SUMO2) cross-link involves residue Lys-383. A compositionally biased stretch (basic and acidic residues) spans 388–399; it reads DCSEKTALDDRP. Disordered regions lie at residues 388-442, 454-485, and 498-525; these read DCSE…DPSD, TAAA…AKRR, and KVNE…ADFP. Phosphoserine is present on residues Ser-411 and Ser-422. Lys-430 is covalently cross-linked (Glycyl lysine isopeptide (Lys-Gly) (interchain with G-Cter in SUMO2)). Thr-431 is subject to Phosphothreonine. Phosphoserine is present on residues Ser-434, Ser-435, and Ser-438. A compositionally biased stretch (basic and acidic residues) spans 466–478; sequence LSLKTEDDQKDMS. Glycyl lysine isopeptide (Lys-Gly) (interchain with G-Cter in SUMO2) cross-links involve residues Lys-469 and Lys-475. 2 C2H2-type zinc fingers span residues 546–569 and 575–598; these read FKCK…NMYH and YACD…QTQH. At Ser-605 the chain carries Phosphoserine. Residues Lys-617, Lys-643, and Lys-659 each participate in a glycyl lysine isopeptide (Lys-Gly) (interchain with G-Cter in SUMO2) cross-link. The C2H2-type 3 zinc-finger motif lies at 670–692; it reads YICTYCGKAYRFLSQFKQHIKMH. Lys-702 is covalently cross-linked (Glycyl lysine isopeptide (Lys-Gly) (interchain with G-Cter in SUMO2)). Ser-714 carries the post-translational modification Phosphoserine. Residues 748-770 form a C2H2-type 4; atypical zinc finger; the sequence is AVCPYCSLRFFSPELKQEHESKC. Glycyl lysine isopeptide (Lys-Gly) (interchain with G-Cter in SUMO2) cross-links involve residues Lys-763 and Lys-785. The C2H2-type 5 zinc finger occupies 775–798; sequence LTCLECMRTFKSSFSIWRHQVEVH. The disordered stretch occupies residues 806–840; it reads TENFSLPVLDHNGDVTGSSRPQSQPEPNKVNHIVT. Over residues 820 to 831 the composition is skewed to polar residues; the sequence is VTGSSRPQSQPE. A Glycyl lysine isopeptide (Lys-Gly) (interchain with G-Cter in SUMO2) cross-link involves residue Lys-875. Lys-879 is covalently cross-linked (Glycyl lysine isopeptide (Lys-Gly) (interchain with G-Cter in SUMO1); alternate). A Glycyl lysine isopeptide (Lys-Gly) (interchain with G-Cter in SUMO2); alternate cross-link involves residue Lys-879. A disordered region spans residues 879 to 906; it reads KEEPVEEAEEEAPEASTAPKEAGPSKEA. Over residues 882–891 the composition is skewed to acidic residues; sequence PVEEAEEEAP. Residues 909-932 form a C2H2-type 6; atypical zinc finger; the sequence is WPCEKCGKMFTVHKQLERHQELLC. A Glycyl lysine isopeptide (Lys-Gly) (interchain with G-Cter in SUMO2) cross-link involves residue Lys-935. Residues 937–959 form a C2H2-type 7 zinc finger; that stretch reads FICHVCNKAFRTNFRLWSHFQSH. Residues 963-1014 are disordered; the sequence is ASEESAHKESEVCPVPTNSPSPPPLPPPPPLPKIQPLEPDSPTGLSENPTPA. Residues 979–995 show a composition bias toward pro residues; the sequence is TNSPSPPPLPPPPPLPK. At Ser-1003 the chain carries Phosphoserine. The segment at 1043–1065 adopts a C2H2-type 8 zinc-finger fold; that stretch reads FMCKLCHRTFKTAFSLWSHEQTH.

In terms of assembly, homodimer. Interacts with ZBTB14. As to expression, ubiquitous in fetal and adult tissues.

The protein localises to the nucleus. Functionally, acts as a transcription repressor. This Homo sapiens (Human) protein is Zinc finger and BTB domain-containing protein 21 (ZBTB21).